The primary structure comprises 60 residues: Large ribosomal subunit protein uL30 (60 aa).

It belongs to the universal ribosomal protein uL30 family. As to quaternary structure, part of the 50S ribosomal subunit.

This chain is Large ribosomal subunit protein uL30, found in Symbiobacterium thermophilum (strain DSM 24528 / JCM 14929 / IAM 14863 / T).